A 764-amino-acid chain; its full sequence is E3 ubiquitin-protein ligase CBL-B-B (764 aa).

Low complexity predominate over residues 1-19; it reads MASSSSSSSNSSTSSSALS. The tract at residues 1 to 27 is disordered; that stretch reads MASSSSSSSNSSTSSSALSGRLPGARS. The interval 48 to 180 is 4H; sequence PPKQAAADRR…KAIFPSGQFQ (133 aa). In terms of domain architecture, Cbl-PTB spans 48 to 356; the sequence is PPKQAAADRR…GRSYNPDLTD (309 aa). Residues 181 to 253 form an EF-hand-like region; sequence GDTFRITKAD…FEFDIFARLF (73 aa). The Ca(2+) site is built by D234, T236, N238, Y240, and E245. The SH2-like stretch occupies residues 254–356; sequence QPWSSILRNW…GRSYNPDLTD (103 aa). R299 is a binding site for 4-O-phospho-L-tyrosine. Positions 357–385 are linker; it reads LCEPTPHDHIKVTQEQYELYCEMGSTFQL. Residues 386 to 425 form an RING-type zinc finger; the sequence is CKICAENDKDVKIEPCGHLMCTSCLTSWQESDGQGCPFCR. Disordered stretches follow at residues 482–583 and 707–726; these read MNER…SRTC and KVRNSAEEDDSEYKIPSSHP. Residues 485–498 are compositionally biased toward polar residues; the sequence is RQNSPVTSPGSSPL. A compositionally biased stretch (pro residues) spans 556–578; it reads LPAPPPPLREPPPPPERPPPIPP.

Interacts with several SH3 domain-containing proteins and with poly-ubiquitinated proteins.

Its subcellular location is the cytoplasm. It carries out the reaction S-ubiquitinyl-[E2 ubiquitin-conjugating enzyme]-L-cysteine + [acceptor protein]-L-lysine = [E2 ubiquitin-conjugating enzyme]-L-cysteine + N(6)-ubiquitinyl-[acceptor protein]-L-lysine.. It functions in the pathway protein modification; protein ubiquitination. E3 ubiquitin-protein ligase which accepts ubiquitin from specific E2 ubiquitin-conjugating enzymes, and transfers it to substrates, generally promoting their degradation by the proteasome. The sequence is that of E3 ubiquitin-protein ligase CBL-B-B (cblb-b) from Xenopus laevis (African clawed frog).